A 409-amino-acid polypeptide reads, in one-letter code: Arginine biosynthesis bifunctional protein ArgJ (409 aa).

Positions 156, 182, 193, 280, 404, and 409 each coordinate substrate. Catalysis depends on Thr193, which acts as the Nucleophile.

This sequence belongs to the ArgJ family. As to quaternary structure, heterotetramer of two alpha and two beta chains.

It localises to the cytoplasm. It carries out the reaction N(2)-acetyl-L-ornithine + L-glutamate = N-acetyl-L-glutamate + L-ornithine. The catalysed reaction is L-glutamate + acetyl-CoA = N-acetyl-L-glutamate + CoA + H(+). Its pathway is amino-acid biosynthesis; L-arginine biosynthesis; L-ornithine and N-acetyl-L-glutamate from L-glutamate and N(2)-acetyl-L-ornithine (cyclic): step 1/1. It participates in amino-acid biosynthesis; L-arginine biosynthesis; N(2)-acetyl-L-ornithine from L-glutamate: step 1/4. Catalyzes two activities which are involved in the cyclic version of arginine biosynthesis: the synthesis of N-acetylglutamate from glutamate and acetyl-CoA as the acetyl donor, and of ornithine by transacetylation between N(2)-acetylornithine and glutamate. This is Arginine biosynthesis bifunctional protein ArgJ from Ralstonia nicotianae (strain ATCC BAA-1114 / GMI1000) (Ralstonia solanacearum).